The following is a 448-amino-acid chain: Signal recognition particle 54 kDa protein (448 aa).

Residues 107–114 (GIQGSGKT), 189–193 (DSAGR), and 247–250 (TKLD) contribute to the GTP site.

It belongs to the GTP-binding SRP family. SRP54 subfamily. As to quaternary structure, part of the signal recognition particle protein translocation system, which is composed of SRP and FtsY. Archaeal SRP consists of a 7S RNA molecule of 300 nucleotides and two protein subunits: SRP54 and SRP19.

The protein localises to the cytoplasm. It catalyses the reaction GTP + H2O = GDP + phosphate + H(+). Functionally, involved in targeting and insertion of nascent membrane proteins into the cytoplasmic membrane. Binds to the hydrophobic signal sequence of the ribosome-nascent chain (RNC) as it emerges from the ribosomes. The SRP-RNC complex is then targeted to the cytoplasmic membrane where it interacts with the SRP receptor FtsY. The sequence is that of Signal recognition particle 54 kDa protein from Thermococcus kodakarensis (strain ATCC BAA-918 / JCM 12380 / KOD1) (Pyrococcus kodakaraensis (strain KOD1)).